The chain runs to 591 residues: Aspartate--tRNA(Asp/Asn) ligase (591 aa).

Residue Glu-176 participates in L-aspartate binding. Residues 200-203 form an aspartate region; the sequence is QLFK. L-aspartate is bound at residue Arg-222. ATP-binding positions include 222 to 224 and Gln-231; that span reads RDE. An L-aspartate-binding site is contributed by His-450. Glu-484 lines the ATP pocket. Arg-491 is a binding site for L-aspartate. Position 536 to 539 (536 to 539) interacts with ATP; sequence GLDR.

It belongs to the class-II aminoacyl-tRNA synthetase family. Type 1 subfamily. In terms of assembly, homodimer.

It is found in the cytoplasm. The enzyme catalyses tRNA(Asx) + L-aspartate + ATP = L-aspartyl-tRNA(Asx) + AMP + diphosphate. Functionally, aspartyl-tRNA synthetase with relaxed tRNA specificity since it is able to aspartylate not only its cognate tRNA(Asp) but also tRNA(Asn). Reaction proceeds in two steps: L-aspartate is first activated by ATP to form Asp-AMP and then transferred to the acceptor end of tRNA(Asp/Asn). This Bacillus mycoides (strain KBAB4) (Bacillus weihenstephanensis) protein is Aspartate--tRNA(Asp/Asn) ligase.